The following is a 956-amino-acid chain: uncharacterized protein (956 aa).

One can recognise a Fibronectin type-III domain in the interval 40 to 141 (PATKVSIDKI…IYCMTKAREA (102 aa)). 2 disordered regions span residues 152 to 173 (RNTI…PAPL) and 488 to 600 (NNGD…SYSH). Composition is skewed to polar residues over residues 153–165 (NTIT…QPRN) and 488–523 (NNGD…SRTG). T154 is subject to Phosphothreonine. 2 positions are modified to phosphoserine: S501 and S520. Over residues 524–543 (SIDLISNNNKSINNSNADSA) the composition is skewed to low complexity. A compositionally biased stretch (polar residues) spans 552–563 (VSYSPSNEPIQP). The segment covering 564–574 (SSSLLSQLTQD) has biased composition (low complexity). Residues 578 to 599 (RSMLSNHISSNNENKQQPSSYS) show a composition bias toward polar residues. S802, S842, and S895 each carry phosphoserine. The interval 875–956 (VGPKVPAKEP…NLFNPHSHDS (82 aa)) is disordered. The span at 895-904 (SNSSISSAWS) shows a compositional bias: low complexity.

This is an uncharacterized protein from Saccharomyces cerevisiae (strain ATCC 204508 / S288c) (Baker's yeast).